The sequence spans 708 residues: Elongation factor G (708 aa).

The 283-residue stretch at 8–290 (KRYRNIGISA…AVIQYLPAPM (283 aa)) folds into the tr-type G domain. Residues 17 to 24 (AHIDAGKT), 88 to 92 (DTPGH), and 142 to 145 (NKMD) each bind GTP.

The protein belongs to the TRAFAC class translation factor GTPase superfamily. Classic translation factor GTPase family. EF-G/EF-2 subfamily.

It is found in the cytoplasm. Functionally, catalyzes the GTP-dependent ribosomal translocation step during translation elongation. During this step, the ribosome changes from the pre-translocational (PRE) to the post-translocational (POST) state as the newly formed A-site-bound peptidyl-tRNA and P-site-bound deacylated tRNA move to the P and E sites, respectively. Catalyzes the coordinated movement of the two tRNA molecules, the mRNA and conformational changes in the ribosome. This chain is Elongation factor G, found in Psychrobacter cryohalolentis (strain ATCC BAA-1226 / DSM 17306 / VKM B-2378 / K5).